The primary structure comprises 214 residues: Octanoyltransferase (214 aa).

The region spanning 29–214 (SETLDEIWVL…QHLQKQLIPS (186 aa)) is the BPL/LPL catalytic domain. Substrate-binding positions include 69–76 (RGGEITYH), 146–148 (ALG), and 159–161 (GLA). C177 acts as the Acyl-thioester intermediate in catalysis.

The protein belongs to the LipB family.

It localises to the cytoplasm. It catalyses the reaction octanoyl-[ACP] + L-lysyl-[protein] = N(6)-octanoyl-L-lysyl-[protein] + holo-[ACP] + H(+). It functions in the pathway protein modification; protein lipoylation via endogenous pathway; protein N(6)-(lipoyl)lysine from octanoyl-[acyl-carrier-protein]: step 1/2. In terms of biological role, catalyzes the transfer of endogenously produced octanoic acid from octanoyl-acyl-carrier-protein onto the lipoyl domains of lipoate-dependent enzymes. Lipoyl-ACP can also act as a substrate although octanoyl-ACP is likely to be the physiological substrate. In Polynucleobacter necessarius subsp. necessarius (strain STIR1), this protein is Octanoyltransferase.